We begin with the raw amino-acid sequence, 229 residues long: Ribonuclease HII (229 aa).

The region spanning 34-223 is the RNase H type-2 domain; the sequence is WPVAGADEAG…LRKVEDGPQM (190 aa). Residues D40, E41, and D131 each coordinate a divalent metal cation.

Belongs to the RNase HII family. Mn(2+) is required as a cofactor. It depends on Mg(2+) as a cofactor.

Its subcellular location is the cytoplasm. It catalyses the reaction Endonucleolytic cleavage to 5'-phosphomonoester.. Its function is as follows. Endonuclease that specifically degrades the RNA of RNA-DNA hybrids. The sequence is that of Ribonuclease HII from Rhizobium leguminosarum bv. trifolii (strain WSM2304).